A 90-amino-acid polypeptide reads, in one-letter code: MNYFAVLCIFSCICFWQFSDAAPFISVQSSSQARSQKVMNGMLRTLYDYSVQDSVNDATGHLIHTHKADFNSDVMSPDEIESVRQQLNMA.

The N-terminal stretch at 1 to 21 is a signal peptide; it reads MNYFAVLCIFSCICFWQFSDA.

As to expression, main cells of the accessory glands of males.

The protein localises to the secreted. The protein resides in the extracellular space. In terms of biological role, this protein is transferred from male to female during mating and may affect egglaying and behavior after mating. This chain is Accessory gland-specific peptide 26Ab (Acp26Ab), found in Drosophila simulans (Fruit fly).